A 224-amino-acid chain; its full sequence is Urease accessory protein UreF (224 aa).

Belongs to the UreF family. As to quaternary structure, ureD, UreF and UreG form a complex that acts as a GTP-hydrolysis-dependent molecular chaperone, activating the urease apoprotein by helping to assemble the nickel containing metallocenter of UreC. The UreE protein probably delivers the nickel.

The protein resides in the cytoplasm. Functionally, required for maturation of urease via the functional incorporation of the urease nickel metallocenter. The protein is Urease accessory protein UreF of Pseudomonas putida (strain GB-1).